A 526-amino-acid polypeptide reads, in one-letter code: Glucomannan 4-beta-mannosyltransferase 1 (526 aa).

Residues 31–51 (VIIPLLKLAVIVCSVMSIMLF) form a helical membrane-spanning segment. D130 is an active-site residue. D189 and D191 together coordinate substrate. The active site involves D283. The next 4 membrane-spanning stretches (helical) occupy residues 362–382 (IVAHWVTFFFYCIVIPACVIV), 399–419 (ITILNAVSTPRSMHLLVLWIL), 477–497 (PLEIIVGMYMLHCATYDLLFG), and 501–521 (FFVYLLLQAGAFFTMGFGLVG).

It belongs to the glycosyltransferase 2 family. Plant cellulose synthase-like A subfamily.

It localises to the golgi apparatus membrane. It carries out the reaction GDP-mannose + (glucomannan)n = GDP + (glucomannan)n+1.. Possesses 4-beta-mannosyltransferase activity on mannan using GDP-mannose. The beta-1,4-mannan product is the backbone for galactomannan synthesis by galactomannan galactosyltransferase. The galactomannan is a hemicellulosic storage polysaccharide accumulated in the form of secondary wall thickenings in the seed endosperm. This chain is Glucomannan 4-beta-mannosyltransferase 1, found in Cyamopsis tetragonoloba (Guar).